The sequence spans 152 residues: Large ribosomal subunit protein bL9 (152 aa).

This sequence belongs to the bacterial ribosomal protein bL9 family.

Functionally, binds to the 23S rRNA. This Synechococcus sp. (strain WH7803) protein is Large ribosomal subunit protein bL9.